We begin with the raw amino-acid sequence, 124 residues long: Large ribosomal subunit protein eL22 (124 aa).

The protein belongs to the eukaryotic ribosomal protein eL22 family. Component of the large ribosomal subunit. Mature ribosomes consist of a small (40S) and a large (60S) subunit. The 40S subunit contains about 32 different proteins and 1 molecule of RNA (18S). The 60S subunit contains 45 different proteins and 3 molecules of RNA (25S, 5.8S and 5S).

It is found in the cytoplasm. Functionally, component of the ribosome, a large ribonucleoprotein complex responsible for the synthesis of proteins in the cell. The small ribosomal subunit (SSU) binds messenger RNAs (mRNAs) and translates the encoded message by selecting cognate aminoacyl-transfer RNA (tRNA) molecules. The large subunit (LSU) contains the ribosomal catalytic site termed the peptidyl transferase center (PTC), which catalyzes the formation of peptide bonds, thereby polymerizing the amino acids delivered by tRNAs into a polypeptide chain. The nascent polypeptides leave the ribosome through a tunnel in the LSU and interact with protein factors that function in enzymatic processing, targeting, and the membrane insertion of nascent chains at the exit of the ribosomal tunnel. The chain is Large ribosomal subunit protein eL22 from Candida albicans (strain SC5314 / ATCC MYA-2876) (Yeast).